Here is a 667-residue protein sequence, read N- to C-terminus: Probable sulfate permease C320.05 (667 aa).

Residues M1–L27 are disordered. The segment covering F16–R25 has biased composition (polar residues). The next 12 membrane-spanning stretches (helical) occupy residues I77–S97, F102–C122, I162–F182, G198–F218, M240–G260, I275–F295, Y301–P321, G336–L356, L368–G388, V405–F425, L433–F453, and G465–F485. The 126-residue stretch at S532–V657 folds into the STAS domain.

This sequence belongs to the SLC26A/SulP transporter (TC 2.A.53) family.

The protein resides in the endoplasmic reticulum membrane. In terms of biological role, possible sulfate transporter. This is Probable sulfate permease C320.05 from Schizosaccharomyces pombe (strain 972 / ATCC 24843) (Fission yeast).